Consider the following 252-residue polypeptide: 3-dehydroquinate dehydratase (252 aa).

3-dehydroquinate is bound by residues 46–48 and R82; that span reads EWR. H143 (proton donor/acceptor) is an active-site residue. The Schiff-base intermediate with substrate role is filled by K170. The 3-dehydroquinate site is built by R212, S231, and Q235.

This sequence belongs to the type-I 3-dehydroquinase family. In terms of assembly, homodimer.

It carries out the reaction 3-dehydroquinate = 3-dehydroshikimate + H2O. It participates in metabolic intermediate biosynthesis; chorismate biosynthesis; chorismate from D-erythrose 4-phosphate and phosphoenolpyruvate: step 3/7. Functionally, involved in the third step of the chorismate pathway, which leads to the biosynthesis of aromatic amino acids. Catalyzes the cis-dehydration of 3-dehydroquinate (DHQ) and introduces the first double bond of the aromatic ring to yield 3-dehydroshikimate. The sequence is that of 3-dehydroquinate dehydratase from Listeria monocytogenes serotype 4a (strain HCC23).